A 489-amino-acid chain; its full sequence is Rhamnulokinase (489 aa).

An ATP-binding site is contributed by 13-17 (ASSGR). Cysteine 68 and cysteine 222 form a disulfide bridge. Residues glycine 83 and 236 to 238 (HDT) contribute to the substrate site. The Proton acceptor role is filled by aspartate 237. Threonine 259 is a binding site for ATP. Substrate is bound at residue asparagine 296. Glutamine 304 contacts ATP. Residues cysteine 353 and cysteine 370 are joined by a disulfide bond. ATP is bound at residue glycine 402. Cysteines 413 and 417 form a disulfide.

It belongs to the rhamnulokinase family. Mg(2+) serves as cofactor.

It carries out the reaction L-rhamnulose + ATP = L-rhamnulose 1-phosphate + ADP + H(+). The protein operates within carbohydrate degradation; L-rhamnose degradation; glycerone phosphate from L-rhamnose: step 2/3. Functionally, involved in the catabolism of L-rhamnose (6-deoxy-L-mannose). Catalyzes the transfer of the gamma-phosphate group from ATP to the 1-hydroxyl group of L-rhamnulose to yield L-rhamnulose 1-phosphate. The polypeptide is Rhamnulokinase (Salmonella paratyphi B (strain ATCC BAA-1250 / SPB7)).